The primary structure comprises 429 residues: CinA-like protein (429 aa).

This sequence belongs to the CinA family.

This Prochlorococcus marinus (strain MIT 9313) protein is CinA-like protein.